Reading from the N-terminus, the 298-residue chain is Tyrosine recombinase XerC (298 aa).

In terms of domain architecture, Core-binding (CB) spans 1-84 (MNHIQEAFLN…TLRTFYEYWM (84 aa)). Residues 105–286 (YLPQFFYEEE…SNQQLRKVYL (182 aa)) enclose the Tyr recombinase domain. Catalysis depends on residues arginine 145, lysine 169, histidine 238, arginine 241, and histidine 264. Residue tyrosine 273 is the O-(3'-phospho-DNA)-tyrosine intermediate of the active site.

It belongs to the 'phage' integrase family. XerC subfamily. As to quaternary structure, forms a cyclic heterotetrameric complex composed of two molecules of XerC and two molecules of XerD.

The protein localises to the cytoplasm. Functionally, site-specific tyrosine recombinase, which acts by catalyzing the cutting and rejoining of the recombining DNA molecules. The XerC-XerD complex is essential to convert dimers of the bacterial chromosome into monomers to permit their segregation at cell division. It also contributes to the segregational stability of plasmids. This Staphylococcus aureus (strain JH1) protein is Tyrosine recombinase XerC.